Here is a 258-residue protein sequence, read N- to C-terminus: Imidazole glycerol phosphate synthase subunit HisF (258 aa).

Active-site residues include D11 and D130.

It belongs to the HisA/HisF family. As to quaternary structure, heterodimer of HisH and HisF.

It is found in the cytoplasm. It carries out the reaction 5-[(5-phospho-1-deoxy-D-ribulos-1-ylimino)methylamino]-1-(5-phospho-beta-D-ribosyl)imidazole-4-carboxamide + L-glutamine = D-erythro-1-(imidazol-4-yl)glycerol 3-phosphate + 5-amino-1-(5-phospho-beta-D-ribosyl)imidazole-4-carboxamide + L-glutamate + H(+). It participates in amino-acid biosynthesis; L-histidine biosynthesis; L-histidine from 5-phospho-alpha-D-ribose 1-diphosphate: step 5/9. Its function is as follows. IGPS catalyzes the conversion of PRFAR and glutamine to IGP, AICAR and glutamate. The HisF subunit catalyzes the cyclization activity that produces IGP and AICAR from PRFAR using the ammonia provided by the HisH subunit. In Haemophilus influenzae (strain PittEE), this protein is Imidazole glycerol phosphate synthase subunit HisF.